Here is a 371-residue protein sequence, read N- to C-terminus: Cytochrome b (371 aa).

The next 4 helical transmembrane spans lie at 25 to 45 (FGSMLLTCLALQVLTGFFLAV), 69 to 90 (WMMQNLHAIGASMFFICIYIHI), 105 to 125 (WMSGITLLITLMATAFFGYVL), and 170 to 190 (FFALHFILPFAIISLSSLHVI). Heme b contacts are provided by His75 and His89. The heme b site is built by His174 and His188. His193 is an a ubiquinone binding site. A run of 4 helical transmembrane segments spans residues 218 to 238 (HKDLLLLTLMMMFLFIIVSFF), 280 to 300 (LGGALALVMSIMILFCTPFTH), 312 to 332 (LSQLMFWTLVSTFITITWAAT), and 339 to 358 (FITISQVTSILYFTFFLSIP).

The protein belongs to the cytochrome b family. The cytochrome bc1 complex contains 3 respiratory subunits (MT-CYB, CYC1 and UQCRFS1), 2 core proteins (UQCRC1 and UQCRC2) and probably 6 low-molecular weight proteins. Heme b is required as a cofactor.

Its subcellular location is the mitochondrion inner membrane. Component of the ubiquinol-cytochrome c reductase complex (complex III or cytochrome b-c1 complex) that is part of the mitochondrial respiratory chain. The b-c1 complex mediates electron transfer from ubiquinol to cytochrome c. Contributes to the generation of a proton gradient across the mitochondrial membrane that is then used for ATP synthesis. This is Cytochrome b (MT-CYB) from Liasis mackloti savuensis (Savu python).